The primary structure comprises 200 residues: MNDRMVWIDCEMTGLSLSDDALIEVAALVTDSELNILGEGVDIVIRPPERALETMPEVVREMHTASGLLAELDGGTTLADAEAQVLAYVREHVKEPGKAPLCGNSVGTDRGFLLRDMATLEGYLHYRIVDVSSIKELARRWYPRAYFNSPEKNGNHRALADIRESIAELRYYREAVFVPQPGPDSDTARAIAAKHVVSAG.

Positions 5 to 169 constitute an Exonuclease domain; it reads MVWIDCEMTG…ADIRESIAEL (165 aa). Y126 is an active-site residue.

The protein belongs to the oligoribonuclease family.

Its subcellular location is the cytoplasm. Its function is as follows. 3'-to-5' exoribonuclease specific for small oligoribonucleotides. The polypeptide is Oligoribonuclease (Streptomyces coelicolor (strain ATCC BAA-471 / A3(2) / M145)).